The sequence spans 137 residues: Acidic phospholipase A2 beta-bungarotoxin A chain (137 aa).

The first 9 residues, 1–9 (AVCVSLLGA), serve as a signal peptide directing secretion. Positions 10–17 (ANIPPHPL) are excised as a propeptide. Disulfide bonds link C44/C136, C46/C62, C61/C117, C68/C110, C78/C103, and C96/C108. Residues Y45, G47, and G49 each contribute to the Ca(2+) site. H65 is an active-site residue. D66 serves as a coordination point for Ca(2+). D111 is an active-site residue.

The protein belongs to the phospholipase A2 family. Group I subfamily. D49 sub-subfamily. In terms of assembly, heterodimer; disulfide-linked. The A chain has phospholipase A2 activity and the B chain shows homology with the basic protease inhibitors. Ca(2+) serves as cofactor. Expressed by the venom gland.

It localises to the secreted. It carries out the reaction a 1,2-diacyl-sn-glycero-3-phosphocholine + H2O = a 1-acyl-sn-glycero-3-phosphocholine + a fatty acid + H(+). Functionally, beta bungarotoxin is a presynaptic neurotoxin. The A chain has phospholipase activity. PLA2 catalyzes the calcium-dependent hydrolysis of the 2-acyl groups in 3-sn-phosphoglycerides. This chain is Acidic phospholipase A2 beta-bungarotoxin A chain, found in Bungarus candidus (Malayan krait).